The chain runs to 387 residues: Methylthioribose-1-phosphate isomerase (387 aa).

Aspartate 257 serves as the catalytic Proton donor.

Belongs to the eIF-2B alpha/beta/delta subunits family. MtnA subfamily.

It is found in the cytoplasm. The protein resides in the nucleus. It carries out the reaction 5-(methylsulfanyl)-alpha-D-ribose 1-phosphate = 5-(methylsulfanyl)-D-ribulose 1-phosphate. It participates in amino-acid biosynthesis; L-methionine biosynthesis via salvage pathway; L-methionine from S-methyl-5-thio-alpha-D-ribose 1-phosphate: step 1/6. In terms of biological role, catalyzes the interconversion of methylthioribose-1-phosphate (MTR-1-P) into methylthioribulose-1-phosphate (MTRu-1-P). This Aspergillus fumigatus (strain CBS 144.89 / FGSC A1163 / CEA10) (Neosartorya fumigata) protein is Methylthioribose-1-phosphate isomerase (mri1).